Consider the following 291-residue polypeptide: Ribosomal RNA small subunit methyltransferase H (291 aa).

S-adenosyl-L-methionine contacts are provided by residues 31 to 33 (GGY), aspartate 49, phenylalanine 76, aspartate 97, and glutamine 104.

Belongs to the methyltransferase superfamily. RsmH family.

It localises to the cytoplasm. It carries out the reaction cytidine(1402) in 16S rRNA + S-adenosyl-L-methionine = N(4)-methylcytidine(1402) in 16S rRNA + S-adenosyl-L-homocysteine + H(+). Functionally, specifically methylates the N4 position of cytidine in position 1402 (C1402) of 16S rRNA. The polypeptide is Ribosomal RNA small subunit methyltransferase H (Anaplasma marginale (strain St. Maries)).